The sequence spans 406 residues: NAC transcription factor NAM-1 (406 aa).

The segment covering 1–11 has biased composition (polar residues); that stretch reads MGSPDSSSGSA. The tract at residues 1-40 is disordered; sequence MGSPDSSSGSAQKPPRHQHQHQPPPPRRQGSAPELPPGFR. The 170-residue stretch at 35–204 folds into the NAC domain; that stretch reads LPPGFRFHPT…DWVLCRIYKK (170 aa). The DNA-binding element occupies 137 to 210; the sequence is VGVKKALVFY…IYKKTSKAAA (74 aa).

The protein localises to the nucleus. Transcription factor of the NAC family associated with the grain protein content (GPC). Accelerates senescence and increases nutrient remobilization from leaves to developing grains. Sequences of 11 European varieties of H.vulgare tested belongs to the same haplotype while the sequence found in H.spontaneum, an ancestor of the cultivated H.vulgare which has a higher GPC, belongs to an other haplotype. The chain is NAC transcription factor NAM-1 (NAM-1) from Hordeum vulgare subsp. vulgare (Domesticated barley).